The following is a 449-amino-acid chain: Phosphoglucosamine mutase (449 aa).

Ser100 serves as the catalytic Phosphoserine intermediate. Mg(2+)-binding residues include Ser100, Asp241, Asp243, and Asp245. Residue Ser100 is modified to Phosphoserine.

This sequence belongs to the phosphohexose mutase family. Mg(2+) is required as a cofactor. Activated by phosphorylation.

The enzyme catalyses alpha-D-glucosamine 1-phosphate = D-glucosamine 6-phosphate. In terms of biological role, catalyzes the conversion of glucosamine-6-phosphate to glucosamine-1-phosphate. The sequence is that of Phosphoglucosamine mutase from Clostridium botulinum (strain 657 / Type Ba4).